The sequence spans 306 residues: Pre-mRNA-splicing factor cwf26 (306 aa).

Residues 130-152 (KAEERRKREEKSSNLDEEELRKS) are disordered. Positions 130 to 198 (KAEERRKREE…KEQQQGVVQV (69 aa)) form a coiled coil.

The protein belongs to the CWC26 family. Belongs to the 40S cdc5-associated complex (or cwf complex), a spliceosome sub-complex reminiscent of a late-stage spliceosome composed of the U2, U5 and U6 snRNAs and at least brr2, cdc5, cwf2/prp3, cwf3/syf1, cwf4/syf3, cwf5/ecm2, spp42/cwf6, cwf7/spf27, cwf8, cwf9, cwf10, cwf11, cwf12, prp45/cwf13, cwf14, cwf15, cwf16, cwf17, cwf18, cwf19, cwf20, cwf21, cwf22, cwf23, cwf24, cwf25, cwf26, cyp7/cwf27, cwf28, cwf29/ist3, lea1, msl1, prp5/cwf1, prp10, prp12/sap130, prp17, prp22, sap61, sap62, sap114, sap145, slu7, smb1, smd1, smd3, smf1, smg1 and syf2.

The protein localises to the cytoplasm. It is found in the nucleus. Involved in mRNA splicing. This is Pre-mRNA-splicing factor cwf26 (cwf26) from Schizosaccharomyces pombe (strain 972 / ATCC 24843) (Fission yeast).